The following is a 326-amino-acid chain: MPGPTQTLSPNGENNNDIIQDNGTIIPFRKHTVRGERSYSWGMAVNVYSTSITQETMSRHDIIAWVNDIVSLNYTKVEQLCSGAAYCQFMDMLFPGCISLKKVKFQAKLEHEYIHNFKLLQASFKRMNVDKVIPVEKLVKGRFQDNLDFIQWFKKFYDANYDGKEYDPVEARQGQDAIPPPDPGEQIFNLPKKSHHANSPTAGAAKSSPASKPGSTPSRPSSAKRASSSGSASRSDKDLETQVIQLNEQVHSLKLALEGVEKERDFYFGKLREIELLCQEHGQENDDLVQRLMEVLYASDEQEGQTEEPEAEEQAHDQQPQQQEEY.

Ser9 carries the post-translational modification Phosphoserine. In terms of domain architecture, Calponin-homology (CH) spans 56-158; sequence TMSRHDIIAW…FIQWFKKFYD (103 aa). Tyr166 bears the Phosphotyrosine mark. Disordered regions lie at residues 170–239 and 297–326; these read EARQ…DKDL and YASD…QEEY. Residues 186 to 326 are DCTN1-binding; sequence QIFNLPKKSH…DQQPQQQEEY (141 aa). Residues 199-233 show a composition bias toward low complexity; it reads SPTAGAAKSSPASKPGSTPSRPSSAKRASSSGSAS. A phosphoserine mark is found at Ser218 and Ser235. Residues 235-305 enclose the EB1 C-terminal domain; sequence SDKDLETQVI…LYASDEQEGQ (71 aa). The segment at 258 to 301 is APC-binding; sequence EGVEKERDFYFGKLREIELLCQEHGQENDDLVQRLMEVLYASDE. Acidic residues predominate over residues 300–312; sequence DEQEGQTEEPEAE. The span at 317-326 shows a compositional bias: low complexity; sequence DQQPQQQEEY.

It belongs to the MAPRE family. Interacts with DCTN1. Interacts with APC (via C-terminal). Interacts with monomeric and polymerized tubulin. Interacts with SLAIN1. Interacts (via the N-terminal region) with BAG1. Interacts with ASB14. Post-translationally, ubiquitinated in an ASB14-dependent manner; leading to proteasomal degradation. In terms of processing, phosphorylated at Ser-235 by CK2 leading to enhanced cell adhesion. Phosphorylated by CDK1 and AURKB during mitosis reduces the binding affinity of MAPRE2 for microtubules. As to expression, expressed during early stages of apico-basal epithelial differentiation but down-regulated in most cells at later stages.

The protein localises to the cytoplasm. The protein resides in the cytoskeleton. Its subcellular location is the spindle. Its function is as follows. Adapter protein that is involved in microtubule polymerization, and spindle function by stabilizing microtubules and anchoring them at centrosomes. Therefore, ensures mitotic progression and genome stability. Acts as a central regulator of microtubule reorganization in apico-basal epithelial differentiation. Plays a role during oocyte meiosis by regulating microtubule dynamics. Participates in neurite growth by interacting with plexin B3/PLXNB3 and microtubule reorganization during apico-basal epithelial differentiation. Plays also an essential role for cell migration and focal adhesion dynamics. Mechanistically, recruits HAX1 to microtubules in order to regulate focal adhesion dynamics. This chain is Microtubule-associated protein RP/EB family member 2 (Mapre2), found in Mus musculus (Mouse).